We begin with the raw amino-acid sequence, 316 residues long: Transaldolase (316 aa).

The Schiff-base intermediate with substrate role is filled by Lys-127.

The protein belongs to the transaldolase family. Type 2 subfamily.

The protein resides in the cytoplasm. The catalysed reaction is D-sedoheptulose 7-phosphate + D-glyceraldehyde 3-phosphate = D-erythrose 4-phosphate + beta-D-fructose 6-phosphate. The protein operates within carbohydrate degradation; pentose phosphate pathway; D-glyceraldehyde 3-phosphate and beta-D-fructose 6-phosphate from D-ribose 5-phosphate and D-xylulose 5-phosphate (non-oxidative stage): step 2/3. Transaldolase is important for the balance of metabolites in the pentose-phosphate pathway. This is Transaldolase (tal) from Helicobacter pylori (strain ATCC 700392 / 26695) (Campylobacter pylori).